Consider the following 267-residue polypeptide: NAD kinase 1 (267 aa).

Catalysis depends on D45, which acts as the Proton acceptor. NAD(+) is bound by residues 45–46 (DG), 122–123 (NE), R149, D151, and A186.

This sequence belongs to the NAD kinase family. A divalent metal cation serves as cofactor.

The protein resides in the cytoplasm. The catalysed reaction is NAD(+) + ATP = ADP + NADP(+) + H(+). In terms of biological role, involved in the regulation of the intracellular balance of NAD and NADP, and is a key enzyme in the biosynthesis of NADP. Catalyzes specifically the phosphorylation on 2'-hydroxyl of the adenosine moiety of NAD to yield NADP. This chain is NAD kinase 1, found in Oceanobacillus iheyensis (strain DSM 14371 / CIP 107618 / JCM 11309 / KCTC 3954 / HTE831).